A 472-amino-acid chain; its full sequence is Zinc finger CCCH domain-containing protein 59 (472 aa).

The interval 87-139 (YKSPEGNRPRQNAANGSAKPQVIGTGHRVSNQPRKNAVYGPRSSSLSDTRGCG) is disordered. The C3H1-type zinc finger occupies 145–172 (SPKKSVCNFWKDGNCKKGEKCQFLHSWS). 5 WD repeats span residues 185–226 (GHKN…RSIN), 261–301 (HLEG…SDPF), 310–347 (HHSGEVTCFVVGGEVLYSGSVDKTIKVWDLNTLQCRMT), 350–387 (QHIGTVTSLLCWDKCLISSSLDGTIKLWACSENESLKV), and 436–472 (FSTQTICTLTIGPGGLLFSGDKSGNLRVWSLASGTKV).

This chain is Zinc finger CCCH domain-containing protein 59 (ZFWD3), found in Arabidopsis thaliana (Mouse-ear cress).